The chain runs to 100 residues: Urease subunit gamma (100 aa).

The protein belongs to the urease gamma subunit family. Heterotrimer of UreA (gamma), UreB (beta) and UreC (alpha) subunits. Three heterotrimers associate to form the active enzyme.

The protein resides in the cytoplasm. The catalysed reaction is urea + 2 H2O + H(+) = hydrogencarbonate + 2 NH4(+). It participates in nitrogen metabolism; urea degradation; CO(2) and NH(3) from urea (urease route): step 1/1. In Arthrobacter sp. (strain FB24), this protein is Urease subunit gamma.